We begin with the raw amino-acid sequence, 874 residues long: Lon protease (874 aa).

The 244-residue stretch at 18-261 folds into the Lon N-terminal domain; it reads LPVLPLDDAV…RLLTWTKEHL (244 aa). Disordered stretches follow at residues 47-68, 120-144, and 298-318; these read VDAA…GISS, GGVR…SGAG, and LSEL…EPAD. Over residues 124–142 the composition is skewed to low complexity; it reads PAPAGTDTTGTGTADATSG. An ATP-binding site is contributed by 430 to 437; that stretch reads GPPGVGKT. A Lon proteolytic domain is found at 667 to 851; sequence TALPGVATGL…REVLDLALEP (185 aa). Catalysis depends on residues Ser-757 and Lys-800. The segment at 853-874 is disordered; that stretch reads FDADHGGRSPGRAGHSPTALAA.

The protein belongs to the peptidase S16 family. As to quaternary structure, homohexamer. Organized in a ring with a central cavity.

Its subcellular location is the cytoplasm. The catalysed reaction is Hydrolysis of proteins in presence of ATP.. Functionally, ATP-dependent serine protease that mediates the selective degradation of mutant and abnormal proteins as well as certain short-lived regulatory proteins. Required for cellular homeostasis and for survival from DNA damage and developmental changes induced by stress. Degrades polypeptides processively to yield small peptide fragments that are 5 to 10 amino acids long. Binds to DNA in a double-stranded, site-specific manner. The chain is Lon protease from Frankia alni (strain DSM 45986 / CECT 9034 / ACN14a).